Here is a 218-residue protein sequence, read N- to C-terminus: Phosphoglycolate phosphatase (218 aa).

Residue Asp7 is the Nucleophile of the active site. The Mg(2+) site is built by Asp7, Asp9, and Asp167.

Belongs to the HAD-like hydrolase superfamily. CbbY/CbbZ/Gph/YieH family. Requires Mg(2+) as cofactor.

It carries out the reaction 2-phosphoglycolate + H2O = glycolate + phosphate. Its pathway is organic acid metabolism; glycolate biosynthesis; glycolate from 2-phosphoglycolate: step 1/1. Its function is as follows. Specifically catalyzes the dephosphorylation of 2-phosphoglycolate. Is involved in the dissimilation of the intracellular 2-phosphoglycolate formed during the DNA repair of 3'-phosphoglycolate ends, a major class of DNA lesions induced by oxidative stress. This is Phosphoglycolate phosphatase from Cereibacter sphaeroides (strain ATCC 17025 / ATH 2.4.3) (Rhodobacter sphaeroides).